The chain runs to 476 residues: Sulfate adenylyltransferase subunit 1 (476 aa).

A tr-type G domain is found at 24–239 (KSLLRFLTCG…LLETVDVDYE (216 aa)). Residues 33-40 (GSVDDGKS) form a G1 region. 33–40 (GSVDDGKS) lines the GTP pocket. The G2 stretch occupies residues 91-95 (GITID). The interval 112 to 115 (DTPG) is G3. GTP contacts are provided by residues 112–116 (DTPGH) and 167–170 (NKMD). A G4 region spans residues 167-170 (NKMD). The interval 205–207 (SAL) is G5.

Belongs to the TRAFAC class translation factor GTPase superfamily. Classic translation factor GTPase family. CysN/NodQ subfamily. In terms of assembly, heterodimer composed of CysD, the smaller subunit, and CysN.

The enzyme catalyses sulfate + ATP + H(+) = adenosine 5'-phosphosulfate + diphosphate. It participates in sulfur metabolism; hydrogen sulfide biosynthesis; sulfite from sulfate: step 1/3. Functionally, with CysD forms the ATP sulfurylase (ATPS) that catalyzes the adenylation of sulfate producing adenosine 5'-phosphosulfate (APS) and diphosphate, the first enzymatic step in sulfur assimilation pathway. APS synthesis involves the formation of a high-energy phosphoric-sulfuric acid anhydride bond driven by GTP hydrolysis by CysN coupled to ATP hydrolysis by CysD. The sequence is that of Sulfate adenylyltransferase subunit 1 from Vibrio parahaemolyticus serotype O3:K6 (strain RIMD 2210633).